The primary structure comprises 957 residues: Vacuolar membrane protease (957 aa).

Over M1–T10 the chain is Cytoplasmic. A helical membrane pass occupies residues P11–V31. The Vacuolar portion of the chain corresponds to T32–T369. 3 N-linked (GlcNAc...) asparagine glycosylation sites follow: N48, N105, and N136. Positions 152 and 164 each coordinate Zn(2+). The active-site Proton acceptor is the E198. Residues E199, E224, and H297 each contribute to the Zn(2+) site. The chain crosses the membrane as a helical span at residues L370–F390. The Cytoplasmic segment spans residues G391–G423. Residues F424–L444 form a helical membrane-spanning segment. Residues L445–A450 lie on the Vacuolar side of the membrane. Residues F451 to V471 form a helical membrane-spanning segment. The Cytoplasmic segment spans residues A472–M490. The helical transmembrane segment at Y491–V511 threads the bilayer. Residues N512 to P521 lie on the Vacuolar side of the membrane. A helical membrane pass occupies residues A522–F542. Over A543 to K642 the chain is Cytoplasmic. Disordered stretches follow at residues S559–D586 and F603–L627. Over residues F603 to A613 the composition is skewed to basic and acidic residues. A helical membrane pass occupies residues L643–V663. Residues G664–L685 are Vacuolar-facing. A helical transmembrane segment spans residues F686–I706. Residues H707 to V713 lie on the Cytoplasmic side of the membrane. A helical membrane pass occupies residues P714–F734. The Vacuolar portion of the chain corresponds to S735–I957. N-linked (GlcNAc...) asparagine glycosylation is found at N782, N818, and N834.

It belongs to the peptidase M28 family. Requires Zn(2+) as cofactor.

It localises to the vacuole membrane. May be involved in vacuolar sorting and osmoregulation. The chain is Vacuolar membrane protease from Pyrenophora teres f. teres (strain 0-1) (Barley net blotch fungus).